The chain runs to 168 residues: Acetone carboxylase gamma subunit (168 aa).

In terms of assembly, heterohexamer of two alpha, two beta and two gamma subunits. It depends on Fe cation as a cofactor. Mg(2+) is required as a cofactor. Zn(2+) serves as cofactor.

It carries out the reaction acetone + hydrogencarbonate + 2 ATP + 3 H2O = acetoacetate + 2 AMP + 4 phosphate + 4 H(+). Functionally, catalyzes the carboxylation of acetone to form acetoacetate. Has a reduced activity on butanone, and no activity on 2-pentatone, 3-pentatone, 2-hexanone, chloroacetone, pyruvate, phosphoenolpyruvate, acetaldehyde, propionaldehyde and propylene oxide. The sequence is that of Acetone carboxylase gamma subunit from Xanthobacter autotrophicus (strain ATCC BAA-1158 / Py2).